The sequence spans 97 residues: Prophage lipoprotein Bor homolog (97 aa).

The first 16 residues, 1-16, serve as a signal peptide directing secretion; that stretch reads MKKMLLATALALLITG. Cysteine 17 carries the N-palmitoyl cysteine lipid modification. Residue cysteine 17 is the site of S-diacylglycerol cysteine attachment.

The protein belongs to the lambda phage bor family.

The protein resides in the cell membrane. In Escherichia coli (strain K12), this protein is Prophage lipoprotein Bor homolog (borD).